A 65-amino-acid polypeptide reads, in one-letter code: Bucain (65 aa).

Intrachain disulfides connect Cys3–Cys24, Cys17–Cys42, Cys46–Cys57, and Cys58–Cys63.

The protein belongs to the three-finger toxin family. Short-chain subfamily. Orphan group III sub-subfamily. Expressed by the venom gland.

It is found in the secreted. The chain is Bucain from Bungarus candidus (Malayan krait).